The chain runs to 130 residues: Protein ApaG (130 aa).

Residues 3 to 127 form the ApaG domain; sequence RALTRDIEVT…FSLDSPGLVR (125 aa).

The sequence is that of Protein ApaG from Rhizobium meliloti (strain 1021) (Ensifer meliloti).